We begin with the raw amino-acid sequence, 216 residues long: Elongation factor Ts (216 aa).

The involved in Mg(2+) ion dislocation from EF-Tu stretch occupies residues Thr-81–Val-84.

The protein belongs to the EF-Ts family.

Its subcellular location is the cytoplasm. Functionally, associates with the EF-Tu.GDP complex and induces the exchange of GDP to GTP. It remains bound to the aminoacyl-tRNA.EF-Tu.GTP complex up to the GTP hydrolysis stage on the ribosome. This Geobacter metallireducens (strain ATCC 53774 / DSM 7210 / GS-15) protein is Elongation factor Ts.